Reading from the N-terminus, the 66-residue chain is Ocellatin-PT3 (66 aa).

An N-terminal signal peptide occupies residues 1-22 (MAFLKKSLFLVLFLGLVSLSIC). Positions 23–39 (DEEKRQDEDDDDDDDEE) are excised as a propeptide. A Valine amide modification is found at Val-66.

Expressed by the skin glands.

It localises to the secreted. In terms of biological role, has antibacterial activity against Gram-negative bacterium E.coli ATCC 25922 (MIC=320 uM) but not against S.pneumoniae ATCC 700603, S.choleraesuis ATCC 14028 or Gram-positive bacterium S.aureus ATCC 29313. Shows no hemolytic activity and no cytotoxicity. This chain is Ocellatin-PT3, found in Leptodactylus pustulatus (Ceara white-lipped frog).